The chain runs to 530 residues: Glucose-6-phosphate isomerase (530 aa).

Residue Glu-356 is the Proton donor of the active site. Residues His-387 and Lys-502 contribute to the active site.

It belongs to the GPI family.

It localises to the cytoplasm. It catalyses the reaction alpha-D-glucose 6-phosphate = beta-D-fructose 6-phosphate. The protein operates within carbohydrate biosynthesis; gluconeogenesis. It functions in the pathway carbohydrate degradation; glycolysis; D-glyceraldehyde 3-phosphate and glycerone phosphate from D-glucose: step 2/4. Its function is as follows. Catalyzes the reversible isomerization of glucose-6-phosphate to fructose-6-phosphate. In Borreliella burgdorferi (strain ATCC 35210 / DSM 4680 / CIP 102532 / B31) (Borrelia burgdorferi), this protein is Glucose-6-phosphate isomerase.